A 321-amino-acid polypeptide reads, in one-letter code: Arginine-hydroxylase NDUFAF5, mitochondrial (321 aa).

The transit peptide at 1–25 (MNVSVKSLRGVSRTWRSFSSRQGMN) directs the protein to the mitochondrion.

The protein belongs to the methyltransferase superfamily. As to quaternary structure, interacts with NDUFS7.

The protein localises to the mitochondrion inner membrane. Arginine hydroxylase that mediates hydroxylation of 'Arg-111' of NDUFS7 and is involved in the assembly of mitochondrial NADH:ubiquinone oxidoreductase complex (complex I, MT-ND1) at early stages. May also have methyltransferase activity. The chain is Arginine-hydroxylase NDUFAF5, mitochondrial from Danio rerio (Zebrafish).